A 1124-amino-acid chain; its full sequence is Eukaryotic translation initiation factor 3 subunit A (1124 aa).

Residues 96–124 (LKMAEERTEQAQQQSSQATVDIDDLDNLA) are a coiled coil. The region spanning 317 to 498 (IQRMTTHVLI…ECVHFGTDLS (182 aa)) is the PCI domain. 2 stretches are compositionally biased toward basic and acidic residues: residues 812-851 (EERR…RQLA) and 860-883 (EVER…ERRP). Residues 812-1124 (EERRRIEEEL…EEGWTDVKHR (313 aa)) are disordered. Over residues 900 to 910 (PAAAAPANPAA) the composition is skewed to low complexity. Basic and acidic residues-rich tracts occupy residues 928–952 (PRER…EKDG), 960–990 (RGGD…DRGP), 1007–1048 (PRRD…RGGG), and 1063–1100 (DDNR…EARP).

The protein belongs to the eIF-3 subunit A family. Component of the eukaryotic translation initiation factor 3 (eIF-3) complex.

The protein resides in the cytoplasm. Its function is as follows. RNA-binding component of the eukaryotic translation initiation factor 3 (eIF-3) complex, which is involved in protein synthesis of a specialized repertoire of mRNAs and, together with other initiation factors, stimulates binding of mRNA and methionyl-tRNAi to the 40S ribosome. The eIF-3 complex specifically targets and initiates translation of a subset of mRNAs involved in cell proliferation. This Anopheles gambiae (African malaria mosquito) protein is Eukaryotic translation initiation factor 3 subunit A.